A 390-amino-acid chain; its full sequence is NADH-quinone oxidoreductase subunit H (390 aa).

The next 9 membrane-spanning stretches (helical) occupy residues 4 to 24 (WLLTLLITVVKAVAVILALLT), 78 to 98 (LVYTLAPIIAIGMALTAFGGI), 120 to 140 (VLALLALTSMGVYGIFLGGWA), 157 to 177 (MISYELGMGLSILGLLMLVGS), 191 to 211 (GWMILFQSLGFALFLISSFAE), 247 to 266 (YVNMITASALMSTLFFGGWR), 278 to 298 (IADIPILWLVVKIGFFLFVFI), 315 to 337 (FGWKLLLPLALFNTMLVAGYIAF), and 341 to 360 (WGWWPLALLSLLGLTALLAL).

This sequence belongs to the complex I subunit 1 family. As to quaternary structure, NDH-1 is composed of 15 different subunits. Subunits NuoA, H, J, K, L, M, N constitute the membrane sector of the complex.

It is found in the cell membrane. It carries out the reaction a quinone + NADH + 5 H(+)(in) = a quinol + NAD(+) + 4 H(+)(out). In terms of biological role, NDH-1 shuttles electrons from NADH, via FMN and iron-sulfur (Fe-S) centers, to quinones in the respiratory chain. The immediate electron acceptor for the enzyme in this species is believed to be ubiquinone. Couples the redox reaction to proton translocation (for every two electrons transferred, four hydrogen ions are translocated across the cytoplasmic membrane), and thus conserves the redox energy in a proton gradient. This subunit may bind ubiquinone. The chain is NADH-quinone oxidoreductase subunit H from Deinococcus deserti (strain DSM 17065 / CIP 109153 / LMG 22923 / VCD115).